Consider the following 556-residue polypeptide: Carotenoid-cleaving dioxygenase, mitochondrial (556 aa).

Residues His203, His263, His334, and His550 each contribute to the Fe cation site.

This sequence belongs to the carotenoid oxygenase family. Fe(2+) is required as a cofactor.

It is found in the mitochondrion. The enzyme catalyses all-trans-beta-carotene + O2 = beta-ionone + all-trans-10'-apo-beta-carotenal. It catalyses the reaction 5-cis-lycopene + O2 = 5-cis-10'-apo-lycopenal + (3E,5E)-6,10-dimethylundeca-3,5,9-trien-2-one. It carries out the reaction 13-cis-lycopene + O2 = 13-cis-10'-apo-lycopenal + (3E,5E)-6,10-dimethylundeca-3,5,9-trien-2-one. The catalysed reaction is lutein + O2 = (3R,6R)-hydroxy-alpha-ionone + (3R)-3-hydroxy-10'-apo-beta-carotenal. The enzyme catalyses lutein + O2 = (3R,6R)-3-hydroxy-10'-apo-alpha-carotenal + (3R)-hydroxy-beta-ionone. It catalyses the reaction all-trans-zeaxanthin + 2 O2 = 4,9-dimethyldodeca-2,4,6,8,10-pentaenedial + 2 (3R)-hydroxy-beta-ionone. It carries out the reaction all-trans-zeaxanthin + O2 = (3R)-3-hydroxy-10'-apo-beta-carotenal + (3R)-hydroxy-beta-ionone. The catalysed reaction is beta-cryptoxanthin + O2 = all-trans-10'-apo-beta-carotenal + (3R)-hydroxy-beta-ionone. The enzyme catalyses all-trans-10'-apo-beta-carotenal + O2 = beta-ionone + 4,9-dimethyldodeca-2,4,6,8,10-pentaenedial. It catalyses the reaction (3R)-3-hydroxy-10'-apo-beta-carotenal + O2 = 4,9-dimethyldodeca-2,4,6,8,10-pentaenedial + (3R)-hydroxy-beta-ionone. It carries out the reaction (3R,6R)-3-hydroxy-10'-apo-alpha-carotenal + O2 = (3R,6R)-hydroxy-alpha-ionone + 4,9-dimethyldodeca-2,4,6,8,10-pentaenedial. In terms of biological role, broad specificity mitochondrial dioxygenase that mediates the asymmetric oxidative cleavage of carotenoids. Cleaves carotenes (pure hydrocarbon carotenoids) such as all-trans-beta-carotene and lycopene as well as xanthophylls (oxygenated carotenoids) such as zeaxanthin, lutein and beta-cryptoxanthin at both the 9,10 and the 9',10' carbon-carbon double bond. Through its function in carotenoids metabolism regulates oxidative stress and the production of important signaling molecules. The chain is Carotenoid-cleaving dioxygenase, mitochondrial from Macaca fascicularis (Crab-eating macaque).